The sequence spans 122 residues: Large ribosomal subunit protein uL14c (122 aa).

Belongs to the universal ribosomal protein uL14 family. As to quaternary structure, part of the 50S ribosomal subunit.

Its subcellular location is the plastid. It localises to the chloroplast. Functionally, binds to 23S rRNA. The polypeptide is Large ribosomal subunit protein uL14c (Carica papaya (Papaya)).